Consider the following 386-residue polypeptide: 8-amino-7-oxononanoate synthase (386 aa).

Residue Arg-31 participates in substrate binding. 109–110 (GY) contributes to the pyridoxal 5'-phosphate binding site. Position 134 (His-134) interacts with substrate. Pyridoxal 5'-phosphate contacts are provided by residues Ser-180, 205–208 (DEAH), and 236–239 (TLSK). Position 239 is an N6-(pyridoxal phosphate)lysine (Lys-239). Thr-349 contributes to the substrate binding site.

Belongs to the class-II pyridoxal-phosphate-dependent aminotransferase family. BioF subfamily. As to quaternary structure, homodimer. The cofactor is pyridoxal 5'-phosphate.

It catalyses the reaction 6-carboxyhexanoyl-[ACP] + L-alanine + H(+) = (8S)-8-amino-7-oxononanoate + holo-[ACP] + CO2. It functions in the pathway cofactor biosynthesis; biotin biosynthesis. Functionally, catalyzes the decarboxylative condensation of pimeloyl-[acyl-carrier protein] and L-alanine to produce 8-amino-7-oxononanoate (AON), [acyl-carrier protein], and carbon dioxide. In Mycobacterium bovis (strain ATCC BAA-935 / AF2122/97), this protein is 8-amino-7-oxononanoate synthase.